The following is a 198-amino-acid chain: Dynein axonemal light chain 1 (198 aa).

LRR repeat units lie at residues 49–70, 71–92, 94–115, and 116–137; these read ACKH…SGME, NLRI…DAVA, TLEE…EKLV, and NLRV…DKLA. Residues 157 to 195 form the LRRCT domain; sequence KENNATSEYRIEVVKRLPNLKKLDGMPVDVDEREQANVA.

It belongs to the dynein light chain LC1-type family. In terms of assembly, interacts with OCAD2, a outer arm dynein heavy chain. Interacts with tubulin (previously called p45) located within the A-tubule of the outer doublets in a ATP-independent manner.

Its subcellular location is the cytoplasm. The protein localises to the cytoskeleton. It localises to the flagellum axoneme. Part of the multisubunit axonemal ATPase complexes that generate the force for flagellar motility and govern beat frequency. Component of the outer arm dynein (ODA). May be involved in a mechanosensory feedback mechanism controlling ODA activity based on external conformational cues by tethering the outer arm dynein heavy chain (ODA2) to the A-tubule of the outer doublet microtubules within the axoneme. This Chlamydomonas reinhardtii (Chlamydomonas smithii) protein is Dynein axonemal light chain 1.